We begin with the raw amino-acid sequence, 114 residues long: Protein D2 (114 aa).

This sequence belongs to the phosphatidylethanolamine-binding protein family.

The protein is Protein D2 (D2) of Onchocerca volvulus.